Here is a 348-residue protein sequence, read N- to C-terminus: Neuronal growth regulator 1 (348 aa).

An N-terminal signal peptide occupies residues 1-31 (MVLLAQGACCSNQWLAAVLLSLCSCLPAGQS). Ig-like C2-type domains follow at residues 32–128 (VDFP…VHLT), 133–215 (PKIY…RVIV), and 219–307 (PTIQ…LPLN). A disulfide bridge links cysteine 54 with cysteine 112. Asparagine 67 and asparagine 149 each carry an N-linked (GlcNAc...) asparagine glycan. 2 disulfides stabilise this stretch: cysteine 154/cysteine 197 and cysteine 239/cysteine 291. Phosphotyrosine is present on tyrosine 181. Residues asparagine 269, asparagine 280, asparagine 288, and asparagine 301 are each glycosylated (N-linked (GlcNAc...) asparagine). Glycine 318 is lipidated: GPI-anchor amidated glycine. Positions 319-348 (SACDLFSCWSLALTLSSVISIFYLKNAILQ) are cleaved as a propeptide — removed in mature form.

Belongs to the immunoglobulin superfamily. IgLON family. Expressed in brain.

It localises to the cell membrane. May be involved in cell-adhesion. May function as a trans-neural growth-promoting factor in regenerative axon sprouting in the mammalian brain. This is Neuronal growth regulator 1 (Negr1) from Mus musculus (Mouse).